Here is a 238-residue protein sequence, read N- to C-terminus: 15,16-dihydrobiliverdin:ferredoxin oxidoreductase (238 aa).

The protein belongs to the HY2 family.

It carries out the reaction 15,16-dihydrobiliverdin + oxidized 2[4Fe-4S]-[ferredoxin] = biliverdin IXalpha + reduced 2[4Fe-4S]-[ferredoxin] + 2 H(+). Functionally, catalyzes the two-electron reduction of biliverdin IX-alpha at the C15 methine bridge. This is 15,16-dihydrobiliverdin:ferredoxin oxidoreductase from Prochlorococcus marinus (strain MIT 9211).